The chain runs to 433 residues: MVSTSSFQTTKSEEIFAAAQKLMPGGVSSPVRAFKSVGGQPIVFDRVKGAYIWDVDGNQYIDYVGTWGPAICGHAHPDVIAALHEALEKGTSFGAPSVQENILAEMVIEAVPSIEMVRFVNSGTEACMSVLRLMRAFTGREKIIKFEGCYHGHADMFLVKAGSGVATLGLPDSPGVPKATTSFTLTAPYNDLEAVKALFAENPDDIAGVILEPVVGNSGFVLPDAGFLEGLRELTKEYGALLMFDEVMTGFRLAYGGAQEKFGVTPDLTTLGKVIGGGLPVGAYGGRQDIMEMVAPSGPMYQAGTLSGNPLAMTAGIKTLELLQKPGTYDYLNDITQKLADGLLKLAQDAGHAVCGGHIGAMFGLFLTAGPVHNYEDAKKSDLVKFGRFHRAMLERGVYLAPSQFEAGFTSLAHTQADIDRTLAMAKEVFSHL.

Lysine 273 is modified (N6-(pyridoxal phosphate)lysine).

Belongs to the class-III pyridoxal-phosphate-dependent aminotransferase family. HemL subfamily. In terms of assembly, homodimer. The cofactor is pyridoxal 5'-phosphate.

It localises to the cytoplasm. It carries out the reaction (S)-4-amino-5-oxopentanoate = 5-aminolevulinate. It functions in the pathway porphyrin-containing compound metabolism; protoporphyrin-IX biosynthesis; 5-aminolevulinate from L-glutamyl-tRNA(Glu): step 2/2. It participates in porphyrin-containing compound metabolism; chlorophyll biosynthesis. In Rippkaea orientalis (strain PCC 8801 / RF-1) (Cyanothece sp. (strain PCC 8801)), this protein is Glutamate-1-semialdehyde 2,1-aminomutase.